The following is a 1969-amino-acid chain: Hybrid signal transduction histidine kinase B (1969 aa).

Polar residues predominate over residues 1–10 (MEKSEQTNSF). 5 disordered regions span residues 1–91 (MEKS…HETK), 218–335 (KINE…KTKQ), 412–436 (QQQQQHHRHYHHHINSGGSSGSSDK), 468–505 (NNINIQAPSTPVQSRNYPLFTTQSPKNANSASKSKNKL), and 551–598 (GSGG…YNNN). Low complexity predominate over residues 11–55 (ESSNNNNNNIDSNINNNLENNNNKNNNNNNNNNNNNNNNNNNIEN). Residues 56 to 65 (SIDKNNKEDN) are compositionally biased toward basic and acidic residues. Residues 72-86 (SHRKHRTRLKSKKGN) are compositionally biased toward basic residues. Polar residues predominate over residues 242-252 (TNSSILKSSEQ). Residues 280-292 (SSSSDEGSDNSKS) are compositionally biased toward low complexity. The span at 293–304 (QHSSVNTPTLSR) shows a compositional bias: polar residues. Residues 313–335 (SQQSQKQSQQQSQQPQQQNKTKQ) show a composition bias toward low complexity. The span at 416–425 (QHHRHYHHHI) shows a compositional bias: basic residues. The segment covering 469 to 492 (NINIQAPSTPVQSRNYPLFTTQSP) has biased composition (polar residues). A compositionally biased stretch (gly residues) spans 551-571 (GSGGGGSGGGGGGGGGGGGIG). Residues 574-598 (SSFLDDNNNLNNGENFKNSNSYNNN) show a composition bias toward low complexity. 5 consecutive transmembrane segments (helical) span residues 660–680 (AYILNFLNLVLFVVYLLSTIL), 684–704 (EWFIFAPGILLSVIYFFLGKI), 708–728 (MYLIAFLTISTAVAINITSII), 747–767 (LVMIMVPLLFPSIVYSIVILI), and 795–815 (FGELLRSIIIVFVILMFYTIL). A Histidine kinase domain is found at 967–1188 (TVSHELRTPI…TFSFTIPCGI (222 aa)). His-970 bears the Phosphohistidine; by autocatalysis mark. 4 disordered regions span residues 1359–1415 (ASKD…HQLI), 1521–1563 (GIAL…TTQS), 1617–1709 (NNNF…SSHS), and 1755–1832 (QKPQ…TAAA). Gly residues predominate over residues 1373–1398 (GDGGRSLSGGGGGVGSNGNGNGGGGL). 2 stretches are compositionally biased toward low complexity: residues 1399 to 1410 (DSNISPSELSSS) and 1527 to 1549 (SSSKSPSIPSSSSASASALSPNS). 2 stretches are compositionally biased toward polar residues: residues 1554–1563 (ELGNGKTTQS) and 1626–1665 (KPSTPTFLSNQPSPATSNSPQLLQSPTTSTTGSINLSPHR). Composition is skewed to low complexity over residues 1755 to 1774 (QKPQQQQQKPTTTTTTTSTQ) and 1781 to 1821 (KTTT…TTTT). The 128-residue stretch at 1840-1967 (KILLVEDNFV…DILIQMIKKH (128 aa)) folds into the Response regulatory domain. The residue at position 1889 (Asp-1889) is a 4-aspartylphosphate.

Its subcellular location is the membrane. It carries out the reaction ATP + protein L-histidine = ADP + protein N-phospho-L-histidine.. Its function is as follows. Acts in the cytokinin signal transduction pathway that regulates spore germination. Required for the maintenance of spore dormancy. Does not appear to act as a cytokinin receptor. Probably undergoes ATP-dependent autophosphorylation at a conserved histidine residue in the kinase core, which is followed by transfer of the phosphoryl group to a conserved aspartate residue in the receiver domain. The polypeptide is Hybrid signal transduction histidine kinase B (dhkB) (Dictyostelium discoideum (Social amoeba)).